A 579-amino-acid polypeptide reads, in one-letter code: ATP-dependent lipid A-core flippase (579 aa).

5 helical membrane passes run 24–44 (FALS…LPAL), 63–83 (WVPL…FIST), 150–170 (VLGL…IVFA), 251–271 (VIQF…AGQA), and 275–295 (TTTV…FAPL). An ABC transmembrane type-1 domain is found at 25 to 307 (ALSIVGLILT…LTAVNDQLQR (283 aa)). An ABC transporter domain is found at 339–575 (LAFRDVGLTY…QGRYAQLHAL (237 aa)). 373 to 380 (GASGSGKT) is an ATP binding site.

This sequence belongs to the ABC transporter superfamily. Lipid exporter (TC 3.A.1.106) family. Homodimer.

It is found in the cell inner membrane. The enzyme catalyses ATP + H2O + lipid A-core oligosaccharideSide 1 = ADP + phosphate + lipid A-core oligosaccharideSide 2.. Involved in lipopolysaccharide (LPS) biosynthesis. Translocates lipid A-core from the inner to the outer leaflet of the inner membrane. Transmembrane domains (TMD) form a pore in the inner membrane and the ATP-binding domain (NBD) is responsible for energy generation. This Thiobacillus denitrificans (strain ATCC 25259 / T1) protein is ATP-dependent lipid A-core flippase.